The following is a 384-amino-acid chain: MALNSITYQKCFHTSAQQYADNKNKKVIIGMSGGVDSSVSAFILQQQGYQVEGLFMKNWEEDDDTDYCTAAADLADAQNVADRLGIKLHKINFAAEYWDNVFEHFLAEYQAGRTPNPDILCNKEIKFKAFLEYAAEDLGADYIATGHYVRRSADNENAQLLRGLDANKDQSYFLYTLSNQQVAKSLFPVGEIEKPMVRQIATDLGLVTAKKKDSTGICFIGERKFKEFLARFLPAQPGDISTVEGEIVGRHDGLMYYTLGQRKGLGIGGVKGLSEDPFYVVEKDLVNNVLIVAQGHDNSALLSTGLIANQLHWVDRKTIGDTLRCTVKTRYRQTDIACLVEPIDAENIRVIFDEPQIAVTPGQSAVFYQGEVCLGGGVIEAQLK.

ATP-binding positions include 30-37 (GMSGGVDS) and M56. The interaction with target base in tRNA stretch occupies residues 116-118 (NPD). The active-site Nucleophile is the C121. A disulfide bridge links C121 with C218. G146 contributes to the ATP binding site. An interaction with tRNA region spans residues 168-170 (KDQ). Catalysis depends on C218, which acts as the Cysteine persulfide intermediate. The tract at residues 330-331 (RY) is interaction with tRNA.

This sequence belongs to the MnmA/TRMU family.

The protein localises to the cytoplasm. It carries out the reaction S-sulfanyl-L-cysteinyl-[protein] + uridine(34) in tRNA + AH2 + ATP = 2-thiouridine(34) in tRNA + L-cysteinyl-[protein] + A + AMP + diphosphate + H(+). Functionally, catalyzes the 2-thiolation of uridine at the wobble position (U34) of tRNA, leading to the formation of s(2)U34. This is tRNA-specific 2-thiouridylase MnmA from Haemophilus ducreyi (strain 35000HP / ATCC 700724).